A 226-amino-acid polypeptide reads, in one-letter code: PKHD-type hydroxylase Abu_0724 (226 aa).

The Fe2OG dioxygenase domain maps to histidine 78–serine 178. 3 residues coordinate Fe cation: histidine 96, aspartate 98, and histidine 159. Position 169 (arginine 169) interacts with 2-oxoglutarate.

The cofactor is Fe(2+). It depends on L-ascorbate as a cofactor.

This Aliarcobacter butzleri (strain RM4018) (Arcobacter butzleri) protein is PKHD-type hydroxylase Abu_0724.